We begin with the raw amino-acid sequence, 54 residues long: UPF0391 membrane protein Pnap_0920 (54 aa).

A run of 2 helical transmembrane segments spans residues 6–26 and 30–50; these read VVFL…IAAG and IAKI…VVSL.

The protein belongs to the UPF0391 family.

It is found in the cell membrane. In Polaromonas naphthalenivorans (strain CJ2), this protein is UPF0391 membrane protein Pnap_0920.